The following is a 143-amino-acid chain: Putative pre-16S rRNA nuclease (143 aa).

This sequence belongs to the YqgF nuclease family.

It is found in the cytoplasm. Could be a nuclease involved in processing of the 5'-end of pre-16S rRNA. The protein is Putative pre-16S rRNA nuclease of Mycoplasma capricolum subsp. capricolum (strain California kid / ATCC 27343 / NCTC 10154).